Here is a 457-residue protein sequence, read N- to C-terminus: MFKTLYARIAIYSITVILFSALISFVLTNVYYHYNLKASNDAKIMKTLKEARQYEQSAKPTHIQQYFKHLGQMNYQIMTVDQKGHKTFYGEPFREDTLSQNAINNVLNNKDYHGIKDKPFALFVTGFFDNVTDNTVGINFKTKDGSIAVFMRPDIGETFSEFRTFLAVLLMLLLFISISLVIASTYSIIRPVKKLKLATERLIDGDFETPIKQTRKDEIGTLQYHFNKMRESLGQVDQMRQHFVQNVSHEIKTPLTHIHHLLSELQQTSDNTLRQQYINDIYTITTQLSGLTTELLLLSELDNHQHLLFDDKIQVDQLIKDIIRHEQFAADEKSLIILADLESINFLGNQRLLHQALSNLLINAIKYTDVGGAIDIALQHSHNNIIFTISNDGSPISPQAEARLFERFYKVSKHDNSNGLGLAITKSIIELHHGTIQFTQSNEYVTTFTITLPNNSL.

Transmembrane regions (helical) follow at residues 9 to 29 (IAIY…VLTN) and 164 to 184 (TFLA…VIAS). The HAMP domain maps to 186–238 (YSIIRPVKKLKLATERLIDGDFETPIKQTRKDEIGTLQYHFNKMRESLGQVDQ). The region spanning 246–456 (NVSHEIKTPL…TFTITLPNNS (211 aa)) is the Histidine kinase domain. Position 249 is a phosphohistidine; by autocatalysis (H249).

In terms of processing, autophosphorylated.

The protein resides in the cell membrane. It catalyses the reaction ATP + protein L-histidine = ADP + protein N-phospho-L-histidine.. In terms of biological role, member of the two-component regulatory system HssS/HssR involved in intracellular heme homeostasis and tempering of staphylococcal virulence. HssS functions as a heme sensor histidine kinase which is autophosphorylated at a histidine residue and transfers its phosphate group to an aspartate residue of HssR. HssR/HssS activates the expression of hrtAB, an efflux pump, in response to extracellular heme, hemin, hemoglobin or blood. This Staphylococcus aureus (strain MSSA476) protein is Heme sensor protein HssS (hssS).